Reading from the N-terminus, the 415-residue chain is Granaticin polyketide putative beta-ketoacyl synthase 2 (415 aa).

The Ketosynthase family 3 (KS3) domain maps to 6–406; that stretch reads RRRAVVTGLS…GFNSAVVVTL (401 aa).

The protein belongs to the thiolase-like superfamily. Beta-ketoacyl-ACP synthases family.

Its pathway is antibiotic biosynthesis; granaticin biosynthesis. In Streptomyces violaceoruber, this protein is Granaticin polyketide putative beta-ketoacyl synthase 2 (gra-orf2).